The primary structure comprises 278 residues: Orotidine 5'-phosphate decarboxylase (278 aa).

K95 functions as the Proton donor in the catalytic mechanism.

The protein belongs to the OMP decarboxylase family. Type 2 subfamily.

It carries out the reaction orotidine 5'-phosphate + H(+) = UMP + CO2. It functions in the pathway pyrimidine metabolism; UMP biosynthesis via de novo pathway; UMP from orotate: step 2/2. This Corynebacterium glutamicum (strain R) protein is Orotidine 5'-phosphate decarboxylase.